The primary structure comprises 124 residues: Small ribosomal subunit protein eS6 (124 aa).

The protein belongs to the eukaryotic ribosomal protein eS6 family.

The chain is Small ribosomal subunit protein eS6 from Methanococcus maripaludis (strain C6 / ATCC BAA-1332).